Here is a 167-residue protein sequence, read N- to C-terminus: Protein FAM163B (167 aa).

A helical membrane pass occupies residues 6–26 (VVITGGILATVILLCIIAVLC). A Phosphoserine modification is found at serine 40.

This sequence belongs to the FAM163 family.

Its subcellular location is the membrane. The protein is Protein FAM163B (Fam163b) of Mus musculus (Mouse).